The following is a 740-amino-acid chain: Probable RNA-dependent RNA polymerase 1 (740 aa).

This sequence belongs to the RdRP family.

It carries out the reaction RNA(n) + a ribonucleoside 5'-triphosphate = RNA(n+1) + diphosphate. Probably involved in the RNA silencing pathway and required for the generation of small interfering RNAs (siRNAs). The polypeptide is Probable RNA-dependent RNA polymerase 1 (RDR1) (Oryza sativa subsp. japonica (Rice)).